The primary structure comprises 483 residues: ATP synthase subunit beta (483 aa).

ATP is bound at residue 169 to 176; it reads GGAGVGKT.

It belongs to the ATPase alpha/beta chains family. In terms of assembly, F-type ATPases have 2 components, CF(1) - the catalytic core - and CF(0) - the membrane proton channel. CF(1) has five subunits: alpha(3), beta(3), gamma(1), delta(1), epsilon(1). CF(0) has three main subunits: a(1), b(2) and c(9-12). The alpha and beta chains form an alternating ring which encloses part of the gamma chain. CF(1) is attached to CF(0) by a central stalk formed by the gamma and epsilon chains, while a peripheral stalk is formed by the delta and b chains.

It localises to the cell membrane. It catalyses the reaction ATP + H2O + 4 H(+)(in) = ADP + phosphate + 5 H(+)(out). Produces ATP from ADP in the presence of a proton gradient across the membrane. The catalytic sites are hosted primarily by the beta subunits. This is ATP synthase subunit beta from Corynebacterium glutamicum (strain R).